The primary structure comprises 633 residues: DNA topoisomerase 1 (633 aa).

Residues 6–115 (KKYIVVESPA…KNRIVFSEIT (110 aa)) form the Toprim domain. Positions 12 and 84 each coordinate Mg(2+). In terms of domain architecture, Topo IA-type catalytic spans 130–543 (DMKKVRAQLA…EFYESFSSVF (414 aa)). Residues 164–169 (SAGRVQ) form an interaction with DNA region. The O-(5'-phospho-DNA)-tyrosine intermediate role is filled by Tyr288. 2 disulfide bridges follow: Cys559/Cys578 and Cys561/Cys580. The C4-type zinc-finger motif lies at 559-580 (CSCGKEMRLSFGKYGFYLKCEC). The segment at 601 to 633 (LGRKDSESGSPDGRSVEGKGNLSEKRRKGKKGS) is disordered.

The protein belongs to the type IA topoisomerase family. In terms of assembly, monomer. The cofactor is Mg(2+).

The enzyme catalyses ATP-independent breakage of single-stranded DNA, followed by passage and rejoining.. Releases the supercoiling and torsional tension of DNA, which is introduced during the DNA replication and transcription, by transiently cleaving and rejoining one strand of the DNA duplex. Introduces a single-strand break via transesterification at a target site in duplex DNA. The scissile phosphodiester is attacked by the catalytic tyrosine of the enzyme, resulting in the formation of a DNA-(5'-phosphotyrosyl)-enzyme intermediate and the expulsion of a 3'-OH DNA strand. The free DNA strand then undergoes passage around the unbroken strand, thus removing DNA supercoils. Finally, in the religation step, the DNA 3'-OH attacks the covalent intermediate to expel the active-site tyrosine and restore the DNA phosphodiester backbone. This is DNA topoisomerase 1 from Thermotoga maritima (strain ATCC 43589 / DSM 3109 / JCM 10099 / NBRC 100826 / MSB8).